We begin with the raw amino-acid sequence, 131 residues long: MTTKRKPYVRPMTSTWWKKLPFYRFYMLREGTAVPAVWFSIELIFGLFALKHGAESWMGFVGFLQNPVVVILNLITLAAALLHTKTWFELTPKAANIIVKDEKMGPEPIIKGLWVVTAVVTVVILYVALFW.

3 helical membrane-spanning segments follow: residues 30-50 (EGTA…LFAL), 57-77 (WMGF…LITL), and 109-129 (IIKG…YVAL).

It belongs to the FrdC family. In terms of assembly, part of an enzyme complex containing four subunits: a flavoprotein (FrdA), an iron-sulfur protein (FrdB), and two hydrophobic anchor proteins (FrdC and FrdD).

It localises to the cell inner membrane. Its function is as follows. Two distinct, membrane-bound, FAD-containing enzymes are responsible for the catalysis of fumarate and succinate interconversion; fumarate reductase is used in anaerobic growth, and succinate dehydrogenase is used in aerobic growth. Anchors the catalytic components of the fumarate reductase complex to the cell inner membrane, binds quinones. This chain is Fumarate reductase subunit C, found in Salmonella heidelberg (strain SL476).